The primary structure comprises 249 residues: (S)-1-Phenylethanol dehydrogenase (249 aa).

NAD(+) contacts are provided by residues 17–19, aspartate 38, 61–63, asparagine 89, and tyrosine 93; these read NGI and CDV. Serine 141 is a binding site for substrate. The Proton acceptor role is filled by tyrosine 154. NAD(+) is bound by residues lysine 158, 184-187, and threonine 191; that span reads PSLV.

The protein belongs to the short-chain dehydrogenases/reductases (SDR) family. As to quaternary structure, homotetramer.

It catalyses the reaction (S)-1-phenylethanol + NAD(+) = acetophenone + NADH + H(+). Catalyzes the NAD-dependent stereospecific oxidation of (S)-1-phenylethanol to acetophenone in the degradation of ethylbenzene. The chain is (S)-1-Phenylethanol dehydrogenase (ped) from Aromatoleum aromaticum (strain DSM 19018 / LMG 30748 / EbN1) (Azoarcus sp. (strain EbN1)).